Consider the following 394-residue polypeptide: Potassium channel subfamily K member 3 (394 aa).

The Cytoplasmic segment spans residues 1–8 (MKRQNVRT). Residues 9–29 (LALIVCTFTYLLVGAAVFDAL) traverse the membrane as a helical segment. A glycan (N-linked (GlcNAc...) asparagine) is linked at Asn-53. An intramembrane region (pore-forming) is located at residues 78–101 (WRFAGSFYFAITVITTIGYGHAAP). K(+)-binding residues include Thr-93, Ile-94, Gly-95, and Tyr-96. Residues 93-98 (TIGYGH) are selectivity filter 1. Residues 108–128 (VFCMFYALLGIPLTLVMFQSL) form a helical membrane-spanning segment. The Cytoplasmic portion of the chain corresponds to 129-158 (GERINTLVRYLLHRAKKGLGMRRADVSMAN). The chain crosses the membrane as a helical span at residues 159–179 (MVLIGFFSCISTLCIGAAAFS). The segment at residues 184 to 207 (WTFFQAYYYCFITLTTIGFGDYVA) is an intramembrane region (pore-forming). K(+)-binding residues include Thr-199, Ile-200, Gly-201, and Phe-202. The interval 199–204 (TIGFGD) is selectivity filter 2. The chain crosses the membrane as a helical span at residues 223–243 (FSFVYILTGLTVIGAFLNLVV). The segment at 243–248 (VLRFMT) is X-gate. Residues 244-394 (LRFMTMNAED…RGLMKRRSSV (151 aa)) are Cytoplasmic-facing. Disordered stretches follow at residues 266 to 286 (RNGQ…DTAS) and 338 to 357 (TCVE…SDTP). Over residues 269-278 (QAGGGGGGGS) the composition is skewed to gly residues.

It belongs to the two pore domain potassium channel (TC 1.A.1.8) family. As to quaternary structure, homodimer. Heterodimer with KCNK1. Heterodimer with KCNK9. Widespread expression in adult. Strongest expression in pancreas and placenta. Lower expression in brain, lung, prostate, heart, kidney, uterus, small intestine and colon.

The protein localises to the cell membrane. It carries out the reaction K(+)(in) = K(+)(out). The catalysed reaction is Na(+)(in) = Na(+)(out). Inhibited by external acidification, diacylglycerol and anandamide. Activated by halothane and isoflurane. Its function is as follows. K(+) channel that conducts voltage-dependent outward rectifying currents upon membrane depolarization. Voltage sensing is coupled to K(+) electrochemical gradient in an 'ion flux gating' mode where outward but not inward ion flow opens the gate. Changes ion selectivity and becomes permeable to Na(+) ions in response to extracellular acidification. Protonation of the pH sensor His-98 stabilizes C-type inactivation conformation likely converting the channel from outward K(+)-conducting, to inward Na(+)-conducting to nonconductive state. Homo- and heterodimerizes to form functional channels with distinct regulatory and gating properties. Allows K(+) currents with fast-gating kinetics important for the repolarization and hyperpolarization phases of action potentials. In cerebellar granule cells, heteromeric KCNK3:KCNK9 channel may hyperpolarize the resting membrane potential to limit intrinsic neuronal excitability, but once the action potential threshold is reached, it may support high-frequency action potential firing and increased neuronal excitability. Dispensable for central chemosensory respiration i.e. breathing controlled by brainstem CO2/pH, it rather conducts pH-sensitive currents and controls the firing rate of serotonergic raphe neurons involved in potentiation of the respiratory chemoreflex. Additionally, imparts chemosensitivity to type 1 cells in carotid bodies which respond to a decrease in arterial oxygen pressure or an increase in carbon dioxide pressure or pH to initiate adaptive changes in pulmonary ventilation. In adrenal gland, contributes to the maintenance of a hyperpolarized resting membrane potential of aldosterone-producing cells at zona glomerulosa and limits aldosterone release as part of a regulatory mechanism that controls arterial blood pressure and electrolyte homeostasis. In brown adipocytes, mediates K(+) efflux that counteracts norepinephrine-induced membrane depolarization, limits Ca(2+) efflux and downstream cAMP and PKA signaling, ultimately attenuating lipid oxidation and adaptive thermogenesis. This is Potassium channel subfamily K member 3 from Homo sapiens (Human).